The sequence spans 433 residues: Glutamate-1-semialdehyde 2,1-aminomutase (433 aa).

Lysine 273 is subject to N6-(pyridoxal phosphate)lysine.

It belongs to the class-III pyridoxal-phosphate-dependent aminotransferase family. HemL subfamily. In terms of assembly, homodimer. It depends on pyridoxal 5'-phosphate as a cofactor.

The protein resides in the cytoplasm. It carries out the reaction (S)-4-amino-5-oxopentanoate = 5-aminolevulinate. It participates in porphyrin-containing compound metabolism; protoporphyrin-IX biosynthesis; 5-aminolevulinate from L-glutamyl-tRNA(Glu): step 2/2. The polypeptide is Glutamate-1-semialdehyde 2,1-aminomutase (Polynucleobacter necessarius subsp. necessarius (strain STIR1)).